We begin with the raw amino-acid sequence, 397 residues long: Homocitrate synthase AksA (397 aa).

The Pyruvate carboxyltransferase domain occupies 19–270 (VIVYDTTLRD…DPGFNTEVLA (252 aa)).

It belongs to the alpha-IPM synthase/homocitrate synthase family.

The enzyme catalyses acetyl-CoA + 2-oxoglutarate + H2O = (2R)-homocitrate + CoA + H(+). It carries out the reaction 2-oxoadipate + acetyl-CoA + H2O = (R)-dihomocitrate + CoA + H(+). The catalysed reaction is 2-oxoheptanedioate + acetyl-CoA + H2O = (R)-trihomocitrate + CoA + H(+). Its pathway is organic acid metabolism; 2-oxosuberate biosynthesis. Functionally, catalyzes the condensation of alpha-ketoglutarate and acetyl-CoA to form (R)-homocitrate. Can also catalyze the condensation of alpha-ketoadipate with acetyl-CoA to form (R)-homo(2)citrate, and the condensation of alpha-ketopimelate with acetyl-CoA to form (R)-homo(3)citrate. These reactions are part of the biosynthesis pathway of coenzyme B and biotin. The chain is Homocitrate synthase AksA (aksA) from Methanopyrus kandleri (strain AV19 / DSM 6324 / JCM 9639 / NBRC 100938).